The sequence spans 240 residues: UDP-2,3-diacylglucosamine hydrolase (240 aa).

5 residues coordinate Mn(2+): Asp-8, His-10, Asp-41, Asn-79, and His-114. 79-80 (NR) provides a ligand contact to substrate. Residues Asp-122, Ser-160, Asn-164, Lys-167, and His-195 each coordinate substrate. Mn(2+) contacts are provided by His-195 and His-197.

This sequence belongs to the LpxH family. Mn(2+) serves as cofactor.

The protein localises to the cell inner membrane. It catalyses the reaction UDP-2-N,3-O-bis[(3R)-3-hydroxytetradecanoyl]-alpha-D-glucosamine + H2O = 2-N,3-O-bis[(3R)-3-hydroxytetradecanoyl]-alpha-D-glucosaminyl 1-phosphate + UMP + 2 H(+). Its pathway is glycolipid biosynthesis; lipid IV(A) biosynthesis; lipid IV(A) from (3R)-3-hydroxytetradecanoyl-[acyl-carrier-protein] and UDP-N-acetyl-alpha-D-glucosamine: step 4/6. In terms of biological role, hydrolyzes the pyrophosphate bond of UDP-2,3-diacylglucosamine to yield 2,3-diacylglucosamine 1-phosphate (lipid X) and UMP by catalyzing the attack of water at the alpha-P atom. Involved in the biosynthesis of lipid A, a phosphorylated glycolipid that anchors the lipopolysaccharide to the outer membrane of the cell. This Escherichia coli O81 (strain ED1a) protein is UDP-2,3-diacylglucosamine hydrolase.